The sequence spans 1238 residues: Erythroid differentiation-related factor 1 (1238 aa).

Disordered stretches follow at residues 1-38 (MGDAKEAGAEGPPAGAAARGGLSLLSQGESEESSAQGS), 220-268 (QPVS…GSEP), 517-561 (PKKE…SDDS), and 620-647 (KKESDLPAADPSTPIPLKYEDESSRGGP). 3 stretches are compositionally biased toward low complexity: residues 9 to 38 (AEGPPAGAAARGGLSLLSQGESEESSAQGS), 223 to 241 (SSTAEQQESSSSDQTNDSE), and 253 to 263 (SSVSEDPSASS). Residues 530–547 (NSDESYSEEEEEMPDSDE) show a composition bias toward acidic residues. TPR repeat units lie at residues 693 to 726 (SKAYYVLSDAAMSLQKYGRALRYIKLALQSHDTY) and 914 to 953 (AQAHCGAGDELKREFSPEEGLYYNKAIDYYLKALRSLGTR).

It localises to the nucleus. Its function is as follows. Transcription factor involved in erythroid differentiation. Involved in transcriptional activation of the globin gene. The sequence is that of Erythroid differentiation-related factor 1 (EDRF1) from Homo sapiens (Human).